The chain runs to 196 residues: Pyroglutamyl-peptidase 1-like protein (196 aa).

Residues Glu65, Cys127, and His146 contribute to the active site.

This sequence belongs to the peptidase C15 family.

The polypeptide is Pyroglutamyl-peptidase 1-like protein (PGPEP1L) (Homo sapiens (Human)).